A 265-amino-acid polypeptide reads, in one-letter code: Hydroxyethylthiazole kinase (265 aa).

Position 50 (Met50) interacts with substrate. ATP contacts are provided by Arg125 and Thr171. Residue Gly198 participates in substrate binding.

Belongs to the Thz kinase family. Requires Mg(2+) as cofactor.

It catalyses the reaction 5-(2-hydroxyethyl)-4-methylthiazole + ATP = 4-methyl-5-(2-phosphooxyethyl)-thiazole + ADP + H(+). The protein operates within cofactor biosynthesis; thiamine diphosphate biosynthesis; 4-methyl-5-(2-phosphoethyl)-thiazole from 5-(2-hydroxyethyl)-4-methylthiazole: step 1/1. Catalyzes the phosphorylation of the hydroxyl group of 4-methyl-5-beta-hydroxyethylthiazole (THZ). This chain is Hydroxyethylthiazole kinase, found in Salmonella paratyphi B (strain ATCC BAA-1250 / SPB7).